Here is a 222-residue protein sequence, read N- to C-terminus: Protein Thf1 (222 aa).

Positions 169 to 208 (IEKVKRDLELYRSNLDKINQARSLMKELVEQERKRRAQQT) form a coiled coil. The disordered stretch occupies residues 197–222 (VEQERKRRAQQTSAPPAVDASSDAPA). Over residues 209-222 (SAPPAVDASSDAPA) the composition is skewed to low complexity.

This sequence belongs to the THF1 family.

In terms of biological role, may be involved in photosynthetic membrane biogenesis. The sequence is that of Protein Thf1 from Thermosynechococcus vestitus (strain NIES-2133 / IAM M-273 / BP-1).